Consider the following 349-residue polypeptide: MTEFENLTYLHGKPQGAGLLKANPEDFVVVEDLGFEPDGEGEHILVRILKNGCNTRFVADALAKFLKIHAREVSFAGQKDKHAVTEQWLCARVPGKEMPDLSAFQIEGCKVLEYARHKRKLRLGALKGNAFTLVLREVSHRDDVEARLQAINTRGVPNYFGAQRFGIGGSNLQGALRWAQSNAPVRDRNKRSFWLSAARSALFNQIVNERVKKPDFNQVVDGDALQLAGRGSWFVATQEEQAELQRRVDEKELMITAALPGSGEWGTLRDALAFEEAAIADEGELQSLLLREKVEAARRAMLLYPQQLRWNWWDDVTVELRFWLPAGSFATSVVRELINTMGDYAHIAE.

Residue F27 participates in substrate binding. The Nucleophile role is filled by D80. N129 contributes to the substrate binding site. The TRUD domain maps to 155 to 303 (GVPNYFGAQR…VEAARRAMLL (149 aa)). F329 is a binding site for substrate.

This sequence belongs to the pseudouridine synthase TruD family.

The enzyme catalyses uridine(13) in tRNA = pseudouridine(13) in tRNA. Its function is as follows. Responsible for synthesis of pseudouridine from uracil-13 in transfer RNAs. The polypeptide is tRNA pseudouridine synthase D (Citrobacter koseri (strain ATCC BAA-895 / CDC 4225-83 / SGSC4696)).